We begin with the raw amino-acid sequence, 637 residues long: Chaperone protein DnaK (637 aa).

Thr-198 bears the Phosphothreonine; by autocatalysis mark. The interval 600–637 (IAQQQAQAQQAQGADAGAQSKDDDVVDAEFEEVKDDKK) is disordered. Positions 601–618 (AQQQAQAQQAQGADAGAQ) are enriched in low complexity. Residues 623–637 (DVVDAEFEEVKDDKK) are compositionally biased toward acidic residues.

This sequence belongs to the heat shock protein 70 family.

Its function is as follows. Acts as a chaperone. The polypeptide is Chaperone protein DnaK (Vibrio parahaemolyticus serotype O3:K6 (strain RIMD 2210633)).